The primary structure comprises 76 residues: Small ribosomal subunit protein bS18 (76 aa).

The protein belongs to the bacterial ribosomal protein bS18 family. In terms of assembly, part of the 30S ribosomal subunit. Forms a tight heterodimer with protein bS6.

Its function is as follows. Binds as a heterodimer with protein bS6 to the central domain of the 16S rRNA, where it helps stabilize the platform of the 30S subunit. The sequence is that of Small ribosomal subunit protein bS18 from Tolumonas auensis (strain DSM 9187 / NBRC 110442 / TA 4).